Here is a 474-residue protein sequence, read N- to C-terminus: tRNA-2-methylthio-N(6)-dimethylallyladenosine synthase (474 aa).

The MTTase N-terminal domain maps to 3-120 (KKLLIKTWGC…LPEMIKQSQS (118 aa)). 6 residues coordinate [4Fe-4S] cluster: C12, C49, C83, C157, C161, and C164. The Radical SAM core domain maps to 143-375 (RAEGATAFVS…QQTVNTQAMR (233 aa)). The TRAM domain maps to 378–441 (RQMLDTEQRV…ANSLRGELVR (64 aa)).

Belongs to the methylthiotransferase family. MiaB subfamily. Monomer. [4Fe-4S] cluster serves as cofactor.

The protein resides in the cytoplasm. The enzyme catalyses N(6)-dimethylallyladenosine(37) in tRNA + (sulfur carrier)-SH + AH2 + 2 S-adenosyl-L-methionine = 2-methylsulfanyl-N(6)-dimethylallyladenosine(37) in tRNA + (sulfur carrier)-H + 5'-deoxyadenosine + L-methionine + A + S-adenosyl-L-homocysteine + 2 H(+). In terms of biological role, catalyzes the methylthiolation of N6-(dimethylallyl)adenosine (i(6)A), leading to the formation of 2-methylthio-N6-(dimethylallyl)adenosine (ms(2)i(6)A) at position 37 in tRNAs that read codons beginning with uridine. The protein is tRNA-2-methylthio-N(6)-dimethylallyladenosine synthase of Vibrio campbellii (strain ATCC BAA-1116).